The chain runs to 250 residues: Glucosamine-6-phosphate deaminase (250 aa).

D67 serves as the catalytic Proton acceptor; for enolization step. Residue N136 is the For ring-opening step of the active site. H138 (proton acceptor; for ring-opening step) is an active-site residue. The active-site For ring-opening step is E143.

The protein belongs to the glucosamine/galactosamine-6-phosphate isomerase family. NagB subfamily.

The enzyme catalyses alpha-D-glucosamine 6-phosphate + H2O = beta-D-fructose 6-phosphate + NH4(+). The protein operates within amino-sugar metabolism; N-acetylneuraminate degradation; D-fructose 6-phosphate from N-acetylneuraminate: step 5/5. In terms of biological role, catalyzes the reversible isomerization-deamination of glucosamine 6-phosphate (GlcN6P) to form fructose 6-phosphate (Fru6P) and ammonium ion. In Oceanobacillus iheyensis (strain DSM 14371 / CIP 107618 / JCM 11309 / KCTC 3954 / HTE831), this protein is Glucosamine-6-phosphate deaminase.